The chain runs to 477 residues: Cysteine--tRNA ligase (477 aa).

Cys-28 contributes to the Zn(2+) binding site. Positions 30 to 40 match the 'HIGH' region motif; that stretch reads PTVYDYAHIGN. Positions 213, 238, and 242 each coordinate Zn(2+). Positions 270-274 match the 'KMSKS' region motif; the sequence is KMSKS. Lys-273 serves as a coordination point for ATP.

This sequence belongs to the class-I aminoacyl-tRNA synthetase family. In terms of assembly, monomer. It depends on Zn(2+) as a cofactor.

It is found in the cytoplasm. It carries out the reaction tRNA(Cys) + L-cysteine + ATP = L-cysteinyl-tRNA(Cys) + AMP + diphosphate. The sequence is that of Cysteine--tRNA ligase (cysS) from Chlamydia trachomatis serovar D (strain ATCC VR-885 / DSM 19411 / UW-3/Cx).